A 488-amino-acid polypeptide reads, in one-letter code: WD repeat-containing protein slp1 (488 aa).

Disordered stretches follow at residues 1 to 29 and 74 to 93; these read MEIAGNSSTISPTFSTPTKKRNLVFPNSP and CGSPRNKSRPASRSDRFIPS. Residues 7–17 show a composition bias toward low complexity; that stretch reads SSTISPTFSTP. 7 WD repeats span residues 178–215, 219–258, 261–298, 302–341, 344–386, 388–429, and 434–473; these read IDDYYLNLLDWSNLNVVAVALERNVYVWNADSGSVSAL, DESTYVASVKWSHDGSFLSVGLGNGLVDIYDVESQTKLRT, GHQARVGCLSWNRHVLSSGSRSGAIHHHDVRIANHQIG, GHSSEVCGLAWRSDGLQLASGGNDNVVQIWDARSSIPKFT, NHNA…RVNT, DAGS…LTKQ, and AHDTRVLYSALSPDGRILSTAASDENLKFWRVYDGDHVKR.

Belongs to the WD repeat CDC20/Fizzy family. As to quaternary structure, interacts with cdc13, mad3 and mes1.

Required for mad2-dependent spindle checkpoint activation. Promotes ubiquitin-dependent degradation of cdc13 by the anaphase promoting complex/cyclosome (APC/C). The protein is WD repeat-containing protein slp1 (slp1) of Schizosaccharomyces pombe (strain 972 / ATCC 24843) (Fission yeast).